Consider the following 388-residue polypeptide: NADPH-dependent butanol dehydrogenase (388 aa).

It belongs to the iron-containing alcohol dehydrogenase family.

In terms of biological role, this enzyme has activity using butanol and ethanol as substrates. The protein is NADPH-dependent butanol dehydrogenase (adh1) of Clostridium saccharobutylicum.